Here is a 1597-residue protein sequence, read N- to C-terminus: Collagen alpha-1(XVII) chain (1597 aa).

Disordered regions lie at residues 1-155 and 168-188; these read MDVT…PSTR and GSRSASVSPTRNSSNTLPIPK. Residues 1–468 are Cytoplasmic-facing; that stretch reads MDVTKKNKRD…CGSCCSWWKW (468 aa). The nonhelical region (NC16A) stretch occupies residues 1–567; that stretch reads MDVTKKNKRD…AEQENGNLRG (567 aa). Over residues 9–19 the composition is skewed to basic and acidic residues; that stretch reads RDGSEVTERII. Polar residues-rich tracts occupy residues 58-96, 111-120, and 170-184; these read THGSSGYINSSGSTRGNASTSSYRRAHSPASTLPNSPGS, EGSSSGNSSP, and RSASVSPTRNSSNTL. Residues 146–231 form a necessary for interaction with DST and for the recruitment of DST to hemidesmosome region; the sequence is RLQSASPSTR…WSSTLPAGSS (86 aa). A helical; Signal-anchor for type II membrane protein membrane pass occupies residues 469–489; that stretch reads LLGLLLTWLLLLGLLFGLIAL. At 490–1597 the chain is on the extracellular side; sequence AEEVRALKAR…KGGSWRLTSY (1108 aa). 5 disordered regions span residues 562–857, 907–927, 970–1041, 1289–1316, and 1344–1394; these read NGNL…SSSS, LRGPPGPPGPPGPPDLPFRVR, LETY…ISSS, TAGVSSIPGPPGPPGPPGPRGPPGVSGA, and FIVG…SSMG. The interval 568–1572 is triple-helical region; it reads SPGPKGDMGS…ELPLEEQPLA (1005 aa). Residues 604 to 632 are compositionally biased toward low complexity; that stretch reads PKGQKGSVGEPGMEGPMGQRGREGPMGPR. Residues 665–674 are compositionally biased toward gly residues; it reads GPKGSGGSPG. Composition is skewed to low complexity over residues 730–748 and 774–796; these read PGAVGEPGAKGAVGPAGPD and DPGKPGFTGPQGPQGLPGTPGRP. The segment covering 820 to 838 has biased composition (pro residues); it reads PGPPGPPGAMGPPGPPGAP. Positions 847-857 are enriched in low complexity; that stretch reads AGESFMGSSSS. Pro residues-rich tracts occupy residues 910-922, 977-986, 1023-1035, 1296-1310, and 1348-1357; these read PPGPPGPPGPPDL, PPGPPGPPGP, PGPPGPPGPPGPP, PGPPGPPGPPGPRGP, and PPGPPGPQGP. Residues 1377–1393 are compositionally biased toward low complexity; the sequence is SSHSASVSRGSSYSSSM. Asn1493 is a glycosylation site (N-linked (GlcNAc...) asparagine). Positions 1531-1566 are disordered; that stretch reads GHPALEGTREKKETKVTKSMRGGEREASPSSHELPL. The segment covering 1537–1557 has biased composition (basic and acidic residues); that stretch reads GTREKKETKVTKSMRGGEREA. The tract at residues 1573-1597 is nonhelical region (NC1); it reads SVLAMAYGVHVKISPKGGSWRLTSY.

Homotrimers of alpha 1(XVII)chains. Interacts (via cytoplasmic region) with ITGB4 (via cytoplasmic region). Interacts (via cytoplasmic region) with DST (via N-terminus). Interacts (via N-terminus) with PLEC. Interacts (via cytoplasmic region) with DSP. In terms of processing, the intracellular/endo domain is disulfide-linked. Post-translationally, prolines at the third position of the tripeptide repeating unit (G-X-Y) are hydroxylated in some or all of the chains. The ectodomain is shedded from the surface of keratinocytes resulting in a 120-kDa soluble form, also named as 120 kDa linear IgA disease antigen homolog. The shedding is mediated by membrane-bound metalloproteases. Upper lamina lucidalhemidesmosome.

The protein localises to the cell junction. It is found in the hemidesmosome. The protein resides in the membrane. It localises to the secreted. Its subcellular location is the extracellular space. The protein localises to the extracellular matrix. It is found in the basement membrane. In terms of biological role, the 120 kDa linear IgA disease antigen homolog is an anchoring filament component involved in dermal-epidermal cohesion. This is Collagen alpha-1(XVII) chain (COL17A1) from Canis lupus familiaris (Dog).